We begin with the raw amino-acid sequence, 54 residues long: Lectin alpha chain (54 aa).

It belongs to the leguminous lectin family. As to quaternary structure, tetramer of two alpha and two beta chains.

The chain is Lectin alpha chain from Lathyrus odoratus (Sweet pea).